We begin with the raw amino-acid sequence, 468 residues long: MAESDLWSVDANSALELSLVEPTEDGLTTVTRFHPRFTYPLFGEEEQIFGYQDLKINLQYHAPDMRPNVKITHSKKFKSIGETQPTDLDALLQGYLPPVAFAKKREFEDAIRLMPADWTPPGEILSEFDGVDGAKFEIRRSNLADDASRQIIDRVQLLILLFIEGGSYIGTDTTDSLDRWDIFFLYNIKPSTTDGTSRYQFAGYSTVYKFFPLQRFPLEPKEAHENLELPSGEFPFSNLRSRTRISQFLILPPFQKSGNGSRLYRTIYDYCLRDPNVIEVTVEDPNEAFDDMRDVADLDFLRQKSEFTDLRINTDIHIPKQGAAPRGVVDEVKSEEARCLYRIAPRQFSRVLEMHLMSRLAETVRPTLVDDKVVAKPTKIETHEYDLWKLFVKQRLYRHNKEVLSQLDRHDRIERLNETLGSVELEYARILALAERRTQATSSNLKRKLDDDENTEGSSSKKARVEDA.

S8 is subject to Phosphoserine. Interaction with histone H4 N-terminus stretches follow at residues 44 to 46 and 208 to 210; these read EEE and YKF. Residues 248 to 250 and 255 to 261 contribute to the acetyl-CoA site; these read FLI and QKSGNGS. E283 (proton donor/acceptor) is an active-site residue. The interval 442 to 468 is disordered; sequence SSNLKRKLDDDENTEGSSSKKARVEDA.

The protein belongs to the HAT1 family. In terms of assembly, component of the HAT-B complex composed of at least HAT1 and HAT2. The HAT-B complex binds to histone H4 tail. In the nucleus, interacts with GSK1 and SSB1. In the cytoplasm, interacts with ATG3 and ATG9. In terms of processing, phosphorylated at Ser-8 by GSK1 in the nucleus which impairs its translocation to the cytoplasm through interfering the interaction between HAT1 and SSB1. Dephosphorylation under nutrient starvation conditions promotes the interaction between HAT1 and SSB1 and results in the translocation of HAT1 from the nucleus to the cytoplasm in order to acetylate ATG3 and ATG9.

Its subcellular location is the nucleus. It localises to the cytoplasm. The protein resides in the preautophagosomal structure. It carries out the reaction L-lysyl-[protein] + acetyl-CoA = N(6)-acetyl-L-lysyl-[protein] + CoA + H(+). Its function is as follows. Catalytic component of the histone acetylase B (HAT-B) complex. Has intrinsic substrate specificity that modifies lysine in recognition sequence GXGKXG. Involved in DNA double-strand break repair. Required for appressorium turgor pressure, autophagy and conidial nuclear degradation. During the germination process and upon starvation conditions, translocates from the nucleus to the cytoplasm where it acetylates ATG3 at 'lys-262' and 'Lys-267', thus influencing autophagy through controlling ATG3-ATG8 interaction. Also acetylates ATG9 at 'Lys-621' to regulate ATG9 binding to vesicles, which is also important for autophagy and pathogenicity. In Pyricularia oryzae (strain 70-15 / ATCC MYA-4617 / FGSC 8958) (Rice blast fungus), this protein is Histone acetyltransferase type B catalytic subunit.